The primary structure comprises 255 residues: Acetylglutamate kinase (255 aa).

Substrate-binding positions include 40 to 41 (GG), Arg-62, and Asn-153.

The protein belongs to the acetylglutamate kinase family. ArgB subfamily.

It localises to the cytoplasm. The catalysed reaction is N-acetyl-L-glutamate + ATP = N-acetyl-L-glutamyl 5-phosphate + ADP. Its pathway is amino-acid biosynthesis; L-arginine biosynthesis; N(2)-acetyl-L-ornithine from L-glutamate: step 2/4. Catalyzes the ATP-dependent phosphorylation of N-acetyl-L-glutamate. This chain is Acetylglutamate kinase, found in Bacillus thuringiensis subsp. konkukian (strain 97-27).